Consider the following 292-residue polypeptide: Peroxisomal 2,4-dienoyl-CoA reductase [(3E)-enoyl-CoA-producing] (292 aa).

Residues 35–40, 60–64, and Asp-86 each bind NADP(+); these read GGGSGI and RSLPR. Residue Arg-60 coordinates substrate. Substrate-binding positions include Arg-88, Phe-118, and 126-128; that span reads SFN. An N6-acetyllysine modification is found at Lys-151. Residues Lys-182 and 208–214 contribute to the NADP(+) site; that span reads PGAISGT. Arg-219 provides a ligand contact to substrate. Ser-287 is subject to Phosphoserine. Positions 290–292 match the Microbody targeting signal motif; sequence AKL. Position 291 is an N6-acetyllysine (Lys-291).

Belongs to the short-chain dehydrogenases/reductases (SDR) family. 2,4-dienoyl-CoA reductase subfamily. In terms of assembly, monomer, dimer and oligomer.

It is found in the peroxisome. The catalysed reaction is a (2E,4Z)-dienoyl-CoA + NADPH + H(+) = a 4,5-saturated-(3E)-enoyl-CoA + NADP(+). The enzyme catalyses a (2E,4E)-dienoyl-CoA + NADPH + H(+) = a 4,5-saturated-(3E)-enoyl-CoA + NADP(+). It catalyses the reaction (2E,4E)-hexadienoyl-CoA + NADPH + H(+) = (3E)-hexenoyl-CoA + NADP(+). It carries out the reaction (2E,4E)-decadienoyl-CoA + NADPH + H(+) = (3E)-decenoyl-CoA + NADP(+). The catalysed reaction is (2E,4Z,7Z,10Z,13Z,16Z,19Z)-docosaheptaenoyl-CoA + NADPH + H(+) = (3E,7Z,10Z,13Z,16Z,19Z)-docosahexaenoyl-CoA + NADP(+). In terms of biological role, auxiliary enzyme of beta-oxidation. Participates in the degradation of unsaturated fatty enoyl-CoA esters having double bonds in both even- and odd-numbered positions in peroxisome. Catalyzes the NADP-dependent reduction of 2,4-dienoyl-CoA to yield trans-3-enoyl-CoA. Has activity towards short and medium chain 2,4-dienoyl-CoAs, but also towards 2,4,7,10,13,16,19-docosaheptaenoyl-CoA, suggesting that it does not constitute a rate limiting step in the peroxisomal degradation of docosahexaenoic acid. This Rattus norvegicus (Rat) protein is Peroxisomal 2,4-dienoyl-CoA reductase [(3E)-enoyl-CoA-producing] (Decr2).